The following is a 100-amino-acid chain: uncharacterized protein (100 aa).

2 helical membrane-spanning segments follow: residues 1 to 21 and 54 to 74; these read MLVL…YKVK and MILF…VIGA.

It is found in the cell membrane. This is an uncharacterized protein from Bacillus subtilis (strain 168).